The following is a 121-amino-acid chain: Large ribosomal subunit protein uL24 (121 aa).

This sequence belongs to the universal ribosomal protein uL24 family. As to quaternary structure, part of the 50S ribosomal subunit.

Its function is as follows. One of two assembly initiator proteins, it binds directly to the 5'-end of the 23S rRNA, where it nucleates assembly of the 50S subunit. In terms of biological role, located at the polypeptide exit tunnel on the outside of the subunit. The sequence is that of Large ribosomal subunit protein uL24 from Pyrococcus abyssi (strain GE5 / Orsay).